The chain runs to 141 residues: Ubiquitin-like protein ATG12 (141 aa).

Residues 24 to 54 (LELSPETAIPEPPSSVAVSPGTEEPPGDTKK) form a disordered region. Residue glycine 141 forms a Glycyl lysine isopeptide (Gly-Lys) (interchain with K-? in acceptor protein) linkage.

It belongs to the ATG12 family. Forms a conjugate with ATG5. Part of the minor complex composed of 4 sets of ATG12-ATG5 and ATG16L1 (400 kDa); this complex interacts with ATG3 leading to disruption of ATG7 interaction and promotion of ATG8-like proteins lipidation. Forms an 800-kDa complex composed of ATG12-ATG5 and ATG16L2. Interacts with DHX58/RIG-1, IFIH1/MDA5 and MAVS/IPS-1 in monomeric form as well as in ATG12-ATG5 conjugate. The interaction with MAVS is further enhanced upon vesicular stomatitis virus (VSV) infection. Interacts with ATG3; this interaction is essential for phosphatidylethanolamine (PE)-conjugated ATG8-like proteins formation. Interacts with ATG7. Interacts with ATG10. The ATG12-ATG5 conjugate interacts with RAB33A; this interaction is bridged by ATG16L1 and promotes ATG12-ATG5-ATG16L1 complex recruitment to phagophores. Interacts with TECPR1. Interacts with SH3BGRL. The ATG12-ATG5 conjugate interacts with PDCD6IP (via the BRO1 domain); this interaction is bridged by ATG12 and promotes multiple PDCD6IP-mediated functions such as endolysosomal trafficking, macroautophagy and exosome biogenesis. In terms of processing, acetylated by EP300.

The protein resides in the cytoplasm. It is found in the preautophagosomal structure membrane. In terms of biological role, ubiquitin-like protein involved in autophagy vesicles formation. Conjugation with ATG5 through a ubiquitin-like conjugating system involving also ATG7 as an E1-like activating enzyme and ATG10 as an E2-like conjugating enzyme, is essential for its function. The ATG12-ATG5 conjugate acts as an E3-like enzyme which is required for lipidation of ATG8 family proteins and their association to the vesicle membranes. The ATG12-ATG5 conjugate also negatively regulates the innate antiviral immune response by blocking the type I IFN production pathway through direct association with RARRES3 and MAVS. Also plays a role in translation or delivery of incoming viral RNA to the translation apparatus. As part of the ATG8 conjugation system with ATG5 and ATG16L1, required for recruitment of LRRK2 to stressed lysosomes and induction of LRRK2 kinase activity in response to lysosomal stress. This Rattus norvegicus (Rat) protein is Ubiquitin-like protein ATG12.